The sequence spans 217 residues: Redox-sensing transcriptional repressor Rex (217 aa).

The H-T-H motif DNA-binding region spans 17–56; sequence RYLRYVEDLLNHDVLRISSSELSQRMGYTASQVRQDFNNF. 91–96 contacts NAD(+); sequence GVGNLG.

It belongs to the transcriptional regulatory Rex family. As to quaternary structure, homodimer.

The protein resides in the cytoplasm. Its function is as follows. Modulates transcription in response to changes in cellular NADH/NAD(+) redox state. This Caldicellulosiruptor bescii (strain ATCC BAA-1888 / DSM 6725 / KCTC 15123 / Z-1320) (Anaerocellum thermophilum) protein is Redox-sensing transcriptional repressor Rex.